Here is a 72-residue protein sequence, read N- to C-terminus: Small ribosomal subunit protein bS20 (72 aa).

Belongs to the bacterial ribosomal protein bS20 family.

In terms of biological role, binds directly to 16S ribosomal RNA. The sequence is that of Small ribosomal subunit protein bS20 (rpsT) from Aeromonas hydrophila.